The chain runs to 163 residues: ATP synthase subunit b 2 (163 aa).

Residues 5 to 25 (SLATLWATIALIIFLGVAIYI) form a helical membrane-spanning segment.

Belongs to the ATPase B chain family. In terms of assembly, F-type ATPases have 2 components, F(1) - the catalytic core - and F(0) - the membrane proton channel. F(1) has five subunits: alpha(3), beta(3), gamma(1), delta(1), epsilon(1). F(0) has three main subunits: a(1), b(2) and c(10-14). The alpha and beta chains form an alternating ring which encloses part of the gamma chain. F(1) is attached to F(0) by a central stalk formed by the gamma and epsilon chains, while a peripheral stalk is formed by the delta and b chains.

It localises to the cell inner membrane. In terms of biological role, f(1)F(0) ATP synthase produces ATP from ADP in the presence of a proton or sodium gradient. F-type ATPases consist of two structural domains, F(1) containing the extramembraneous catalytic core and F(0) containing the membrane proton channel, linked together by a central stalk and a peripheral stalk. During catalysis, ATP synthesis in the catalytic domain of F(1) is coupled via a rotary mechanism of the central stalk subunits to proton translocation. Component of the F(0) channel, it forms part of the peripheral stalk, linking F(1) to F(0). The protein is ATP synthase subunit b 2 of Mesorhizobium japonicum (strain LMG 29417 / CECT 9101 / MAFF 303099) (Mesorhizobium loti (strain MAFF 303099)).